A 167-amino-acid chain; its full sequence is Protein-lysine myristoyltransferase RtxC (167 aa).

Active-site residues include histidine 20 and aspartate 89.

The protein belongs to the RTX toxin acyltransferase family.

Its subcellular location is the cytoplasm. The enzyme catalyses tetradecanoyl-[ACP] + L-lysyl-[protein] = N(6)-tetradecanoyl-L-lysyl-[protein] + holo-[ACP] + H(+). Its function is as follows. Protein-lysine myristoyltransferase that catalyzes myristoylation of the protoxin (RtxA) at two internal lysine residues, thereby converting it to the active toxin. The polypeptide is Protein-lysine myristoyltransferase RtxC (Kingella kingae).